We begin with the raw amino-acid sequence, 475 residues long: MAMKIDGANFHERVETNLHNTFMRGAVAGAQERLHTRRLEAAEELGNWEEWRALGEEIRQHTLENLDYYLMQLSENVAKRGGHVFFAQTAEEANNYIRNVVIQKNAKKIVKSKSMVTEEINLNAVLEAAGCEVIETDLGEYILQVDDHDPPSHIVAPALHKNKEQIRDVFRQKLGYKQTEKPEELALHARKMLRHEYLTADIGITGCNFAIAESGSITLVTNEGNADLVTALPKTQITVMGMERIVPTFEEMEVLVSLLTRSAVGQKLTSYITVLTGPRDEGDVDGPEEFHLVIVDNGRSNILGTEFQPVLQCIRCAACVNVCPVYRHIGGHSYGSIYSGPIGAVLSPLLGGYDDYKELPYASSLCAACTEACPVKIPLHELLLKHRQVIVEREGKAPISEKLAMKAFGLGASSSFLYKLGSKVAPSALTPFTNDDRISKGPGPLKAWTEIREFPAPNKERFRDWFREHQKGGEK.

2 consecutive 4Fe-4S ferredoxin-type domains span residues 304–334 (GTEF…GHSY) and 353–382 (YDDY…LHEL). The [4Fe-4S] cluster site is built by Cys-313, Cys-316, Cys-319, Cys-323, Cys-366, Cys-369, and Cys-373.

Belongs to the LutB/YkgF family.

Is involved in L-lactate degradation and allows cells to grow with lactate as the sole carbon source. Has probably a role as an electron transporter during oxidation of L-lactate. The sequence is that of Lactate utilization protein B from Geobacillus sp. (strain WCH70).